We begin with the raw amino-acid sequence, 460 residues long: ATP synthase subunit beta (460 aa).

Position 150–157 (150–157 (GGAGVGKT)) interacts with ATP.

It belongs to the ATPase alpha/beta chains family. In terms of assembly, F-type ATPases have 2 components, CF(1) - the catalytic core - and CF(0) - the membrane proton channel. CF(1) has five subunits: alpha(3), beta(3), gamma(1), delta(1), epsilon(1). CF(0) has three main subunits: a(1), b(2) and c(9-12). The alpha and beta chains form an alternating ring which encloses part of the gamma chain. CF(1) is attached to CF(0) by a central stalk formed by the gamma and epsilon chains, while a peripheral stalk is formed by the delta and b chains.

It is found in the cell inner membrane. It catalyses the reaction ATP + H2O + 4 H(+)(in) = ADP + phosphate + 5 H(+)(out). In terms of biological role, produces ATP from ADP in the presence of a proton gradient across the membrane. The catalytic sites are hosted primarily by the beta subunits. The sequence is that of ATP synthase subunit beta from Yersinia enterocolitica serotype O:8 / biotype 1B (strain NCTC 13174 / 8081).